An 86-amino-acid polypeptide reads, in one-letter code: Large ribosomal subunit protein bL27 (86 aa).

The segment covering 1–10 (MAQKKGGGST) has biased composition (gly residues). The tract at residues 1 to 20 (MAQKKGGGSTRNGRDSESKR) is disordered.

Belongs to the bacterial ribosomal protein bL27 family.

In Bordetella parapertussis (strain 12822 / ATCC BAA-587 / NCTC 13253), this protein is Large ribosomal subunit protein bL27.